A 196-amino-acid chain; its full sequence is Peroxiredoxin TSA2 (196 aa).

Residues 3-161 enclose the Thioredoxin domain; sequence AEVQKQAPPF…ALRLVEGFQW (159 aa). Lysine 14 participates in a covalent cross-link: Glycyl lysine isopeptide (Lys-Gly) (interchain with G-Cter in ubiquitin). The active-site Cysteine sulfenic acid (-SOH) intermediate is the cysteine 48. Glycyl lysine isopeptide (Lys-Gly) (interchain with G-Cter in ubiquitin) cross-links involve residues lysine 89 and lysine 132. Position 174 is a phosphothreonine (threonine 174).

This sequence belongs to the peroxiredoxin family. AhpC/Prx1 subfamily. In terms of assembly, homodimer; disulfide-linked, upon oxidation.

Its subcellular location is the cytoplasm. The catalysed reaction is a hydroperoxide + [thioredoxin]-dithiol = an alcohol + [thioredoxin]-disulfide + H2O. Thiol-specific peroxidase that catalyzes the reduction of hydrogen peroxide and organic hydroperoxides to water and alcohols, respectively. Plays a role in cell protection against oxidative stress by detoxifying peroxides and as sensor of hydrogen peroxide-mediated signaling events. Can act alternatively as peroxidase and molecular chaperone. Oxidative stress and heat shock exposure cause a reversible shift of the protein structure from low MW species to high MW complexes, triggering a peroxidase-to-chaperone functional switch. The chaperone function of the protein enhances resistance to heat shock. This Saccharomyces cerevisiae (strain ATCC 204508 / S288c) (Baker's yeast) protein is Peroxiredoxin TSA2.